The following is a 446-amino-acid chain: C4-dicarboxylate transport protein (446 aa).

A run of 9 helical transmembrane segments spans residues 20–40 (HLYV…HFYP), 56–76 (LVKM…IAGM), 91–111 (IYFL…ANVV), 160–180 (GDIL…AGVG), 200–220 (LVHI…AFTI), 233–253 (FLIL…LGLV), 319–339 (IYMT…LSLG), 344–364 (LLLV…AGFI), and 367–387 (AATL…ILGI).

This sequence belongs to the dicarboxylate/amino acid:cation symporter (DAACS) (TC 2.A.23) family.

Its subcellular location is the cell inner membrane. Responsible for the transport of dicarboxylates such as succinate, fumarate, and malate from the periplasm across the membrane. In Azorhizobium caulinodans (strain ATCC 43989 / DSM 5975 / JCM 20966 / LMG 6465 / NBRC 14845 / NCIMB 13405 / ORS 571), this protein is C4-dicarboxylate transport protein.